Reading from the N-terminus, the 76-residue chain is DNA-directed RNA polymerase subunit omega (76 aa).

The protein belongs to the RNA polymerase subunit omega family. As to quaternary structure, in cyanobacteria the RNAP catalytic core is composed of 2 alpha, 1 beta, 1 beta', 1 gamma and 1 omega subunit. When a sigma factor is associated with the core the holoenzyme is formed, which can initiate transcription.

It catalyses the reaction RNA(n) + a ribonucleoside 5'-triphosphate = RNA(n+1) + diphosphate. Promotes RNA polymerase assembly. Latches the N- and C-terminal regions of the beta' subunit thereby facilitating its interaction with the beta and alpha subunits. This chain is DNA-directed RNA polymerase subunit omega, found in Acaryochloris marina (strain MBIC 11017).